Consider the following 264-residue polypeptide: Thiazole synthase (264 aa).

Catalysis depends on lysine 106, which acts as the Schiff-base intermediate with DXP. 1-deoxy-D-xylulose 5-phosphate-binding positions include glycine 167, 193-194, and 215-216; these read AG and NS.

Belongs to the ThiG family. In terms of assembly, homotetramer. Forms heterodimers with either ThiH or ThiS.

The protein resides in the cytoplasm. It catalyses the reaction [ThiS sulfur-carrier protein]-C-terminal-Gly-aminoethanethioate + 2-iminoacetate + 1-deoxy-D-xylulose 5-phosphate = [ThiS sulfur-carrier protein]-C-terminal Gly-Gly + 2-[(2R,5Z)-2-carboxy-4-methylthiazol-5(2H)-ylidene]ethyl phosphate + 2 H2O + H(+). Its pathway is cofactor biosynthesis; thiamine diphosphate biosynthesis. Catalyzes the rearrangement of 1-deoxy-D-xylulose 5-phosphate (DXP) to produce the thiazole phosphate moiety of thiamine. Sulfur is provided by the thiocarboxylate moiety of the carrier protein ThiS. In vitro, sulfur can be provided by H(2)S. This is Thiazole synthase from Prochlorococcus marinus (strain MIT 9215).